We begin with the raw amino-acid sequence, 499 residues long: Aspartyl/glutamyl-tRNA(Asn/Gln) amidotransferase subunit B (499 aa).

It belongs to the GatB/GatE family. GatB subfamily. Heterotrimer of A, B and C subunits.

The enzyme catalyses L-glutamyl-tRNA(Gln) + L-glutamine + ATP + H2O = L-glutaminyl-tRNA(Gln) + L-glutamate + ADP + phosphate + H(+). It catalyses the reaction L-aspartyl-tRNA(Asn) + L-glutamine + ATP + H2O = L-asparaginyl-tRNA(Asn) + L-glutamate + ADP + phosphate + 2 H(+). Allows the formation of correctly charged Asn-tRNA(Asn) or Gln-tRNA(Gln) through the transamidation of misacylated Asp-tRNA(Asn) or Glu-tRNA(Gln) in organisms which lack either or both of asparaginyl-tRNA or glutaminyl-tRNA synthetases. The reaction takes place in the presence of glutamine and ATP through an activated phospho-Asp-tRNA(Asn) or phospho-Glu-tRNA(Gln). This chain is Aspartyl/glutamyl-tRNA(Asn/Gln) amidotransferase subunit B, found in Leifsonia xyli subsp. xyli (strain CTCB07).